Consider the following 188-residue polypeptide: MARIIRRPLNLTAAVRFRLSPLSPFSGNSGSINSETTSWSELIRVPSLVEGCDYKHWLVLMKPPNGYPTRNHIVQSFVETLAMALGSEEEAKRSIYSVSTKYYYAFGCRIHEPLTYKIRSLPDVKWVLPDSFIVDGDNRYGGEPFVDGEVVPYDEKYHADWLRDQTDEDAKSGVVKKKHRRKRKKKLI.

A mitochondrion-targeting transit peptide spans Met-1–Ser-20. Residues Asp-169–Ile-188 form a disordered region. Basic residues predominate over residues Val-174–Ile-188.

The protein belongs to the MORF family. As to quaternary structure, heterodimers with MORF8/RIP1, MORF5/RIP5 and MORF6/RIP6.

The protein localises to the mitochondrion. Involved in organellar RNA editing. Required for the processing of few RNA editing sites in mitochondria. The protein is Multiple organellar RNA editing factor 7, mitochondrial of Arabidopsis thaliana (Mouse-ear cress).